The chain runs to 1479 residues: ABC transporter ecdL (1479 aa).

3 helical membrane-spanning segments follow: residues leucine 32–leucine 52, leucine 82–phenylalanine 102, and isoleucine 142–methionine 162. N-linked (GlcNAc...) asparagine glycosylation is found at asparagine 183 and asparagine 234. Helical transmembrane passes span tryptophan 251–valine 271 and serine 291–phenylalanine 311. The region spanning leucine 258–glutamine 535 is the ABC transmembrane type-1 1 domain. Asparagine 345 carries an N-linked (GlcNAc...) asparagine glycan. The next 2 helical transmembrane spans lie at leucine 365–leucine 382 and valine 391–leucine 411. Asparagine 427 carries N-linked (GlcNAc...) asparagine glycosylation. 2 helical membrane passes run leucine 469 to phenylalanine 489 and proline 503 to valine 523. The region spanning isoleucine 607–valine 835 is the ABC transporter 1 domain. Asparagine 611 and asparagine 628 each carry an N-linked (GlcNAc...) asparagine glycan. Glycine 641–serine 648 contacts ATP. Residues asparagine 793 and asparagine 797 are each glycosylated (N-linked (GlcNAc...) asparagine). A run of 5 helical transmembrane segments spans residues threonine 885–leucine 905, leucine 955–methionine 975, alanine 1028–tyrosine 1048, tyrosine 1052–leucine 1072, and isoleucine 1135–isoleucine 1155. In terms of domain architecture, ABC transmembrane type-1 2 spans isoleucine 932 to asparagine 1193. Residue asparagine 1161 is glycosylated (N-linked (GlcNAc...) asparagine). Residues alanine 1165–valine 1185 traverse the membrane as a helical segment. A glycan (N-linked (GlcNAc...) asparagine) is linked at asparagine 1187. In terms of domain architecture, ABC transporter 2 spans isoleucine 1230–serine 1461. Glycine 1264–serine 1271 is an ATP binding site. Residues arginine 1460–glutamate 1479 form a disordered region. Positions serine 1461 to glutamate 1479 are enriched in basic and acidic residues.

It belongs to the ABC transporter superfamily. ABCC family. Conjugate transporter (TC 3.A.1.208) subfamily.

The protein localises to the cell membrane. ABC transporter; part of the gene cluster that mediates the biosynthesis of echinocandin B, a fungal lipidated cyclic hexapeptide that acts as an antifungal agent. This Aspergillus rugulosus (Emericella rugulosa) protein is ABC transporter ecdL.